The chain runs to 243 residues: MSADHDHDHDHDHDHKPAPMVEEVSDFEILEMAVRELAIEKGLFSAEDHRVWKDYVHTLGPLPAARLVAKAWLDPEYKKLCIEDGVEASKAVGVNWVTSPPTQFGTPSDYCNLRVLADSPTLKHVVVCTLCSCYPRPILGQSPEWYRSPNYRRRLVRWPRQVLAEFGLQLPSEVQIRVADSNQKTRYIVMPVRPEGTDGWTEDQLAEIVTRDCLIGVAVPKPGITVNAKRPVLKANRPVHHDH.

Co(3+) contacts are provided by Cys128, Cys131, Ser132, and Cys133. Cys131 carries the post-translational modification Cysteine sulfinic acid (-SO2H). Cys133 is modified (cysteine sulfenic acid (-SOH)).

It belongs to the nitrile hydratase subunit alpha family. Heterododecamer consisting of 4 alpha, 4 beta, and 4 gamma subunits. Co(3+) serves as cofactor.

It catalyses the reaction thiocyanate + H2O + 2 H(+) = carbonyl sulfide + NH4(+). It functions in the pathway organosulfur degradation; thiocyanate degradation. Involved in the degradation of thiocyanate. This is Thiocyanate hydrolase subunit gamma (scnC) from Thiobacillus thioparus.